Here is a 140-residue protein sequence, read N- to C-terminus: Large ribosomal subunit protein bL17 (140 aa).

This sequence belongs to the bacterial ribosomal protein bL17 family. Part of the 50S ribosomal subunit. Contacts protein L32.

This chain is Large ribosomal subunit protein bL17, found in Rhizobium johnstonii (strain DSM 114642 / LMG 32736 / 3841) (Rhizobium leguminosarum bv. viciae).